The following is a 57-amino-acid chain: Aminopeptidase A (57 aa).

The Extracellular segment spans residues 1–57 (YLTDHYFKVDLNSTVTQQRFLLDPSELAGITIMQPSDSNIEWLKQYRDDVATWLENS). Asparagine 12 carries an N-linked (GlcNAc...) asparagine glycan.

This sequence belongs to the peptidase M1 family. Homodimer; disulfide-linked. Zn(2+) is required as a cofactor.

Its subcellular location is the cell membrane. It catalyses the reaction Release of N-terminal glutamate (and to a lesser extent aspartate) from a peptide.. Inhibited by the aminopeptidase competitive inhibitors amastatin (Leu and acidic inhibitor), and bestatin (Leu inhibitor), by chelating agents EDTA, and 1,10-Phenanthroline, as well as by Zn(2+) ions. Substrate specificity is modulated by Ca(2+), Ba(2+), and Mn(2+) ions which enhances the enzymatic activity for cleavage of acidic residues. Functionally, venom protein that cleaves N-terminal acidic residues from peptides with high potency in presence of calcium. It may have several roles in venom including alteration of blood pressure by cleaving circulating angiotensin-2, general degradation of host tissue, increase of permeability to other venom components, and/or processing of other toxins in the venom. The sequence is that of Aminopeptidase A from Gloydius blomhoffii (Mamushi).